An 84-amino-acid polypeptide reads, in one-letter code: Large ribosomal subunit protein bL31 (84 aa).

Zn(2+) is bound by residues C16, C18, C38, and C41.

It belongs to the bacterial ribosomal protein bL31 family. Type A subfamily. Part of the 50S ribosomal subunit. Zn(2+) is required as a cofactor.

Its function is as follows. Binds the 23S rRNA. The sequence is that of Large ribosomal subunit protein bL31 from Mycobacterium leprae (strain Br4923).